The primary structure comprises 89 residues: Large ribosomal subunit protein bL28 (89 aa).

The protein belongs to the bacterial ribosomal protein bL28 family.

The chain is Large ribosomal subunit protein bL28 from Chlamydia felis (strain Fe/C-56) (Chlamydophila felis).